Here is a 521-residue protein sequence, read N- to C-terminus: Bifunctional purine biosynthesis protein PurH (521 aa).

The 145-residue stretch at 1-145 folds into the MGS-like domain; that stretch reads MIKQALISVS…KNHRDVTVVV (145 aa).

The protein belongs to the PurH family.

The catalysed reaction is (6R)-10-formyltetrahydrofolate + 5-amino-1-(5-phospho-beta-D-ribosyl)imidazole-4-carboxamide = 5-formamido-1-(5-phospho-D-ribosyl)imidazole-4-carboxamide + (6S)-5,6,7,8-tetrahydrofolate. The enzyme catalyses IMP + H2O = 5-formamido-1-(5-phospho-D-ribosyl)imidazole-4-carboxamide. The protein operates within purine metabolism; IMP biosynthesis via de novo pathway; 5-formamido-1-(5-phospho-D-ribosyl)imidazole-4-carboxamide from 5-amino-1-(5-phospho-D-ribosyl)imidazole-4-carboxamide (10-formyl THF route): step 1/1. It participates in purine metabolism; IMP biosynthesis via de novo pathway; IMP from 5-formamido-1-(5-phospho-D-ribosyl)imidazole-4-carboxamide: step 1/1. The chain is Bifunctional purine biosynthesis protein PurH from Burkholderia orbicola (strain AU 1054).